Here is a 460-residue protein sequence, read N- to C-terminus: Hydroxymethylglutaryl-CoA synthase MYCGRDRAFT_54740 (460 aa).

Residue A35 participates in (3S)-3-hydroxy-3-methylglutaryl-CoA binding. The Proton donor/acceptor role is filled by E86. The (3S)-3-hydroxy-3-methylglutaryl-CoA site is built by C120, N158, T162, S212, H262, K271, N339, and S373. Catalysis depends on C120, which acts as the Acyl-thioester intermediate. H262 (proton donor/acceptor) is an active-site residue.

This sequence belongs to the thiolase-like superfamily. HMG-CoA synthase family.

The enzyme catalyses acetoacetyl-CoA + acetyl-CoA + H2O = (3S)-3-hydroxy-3-methylglutaryl-CoA + CoA + H(+). The protein operates within siderophore biosynthesis. Its function is as follows. Hydroxymethylglutaryl-CoA synthase involved in the biosynthesis of a ferrichrome A-like siderophors which may contribute to organismal virulence. The first step of siderophore biosynthesis is performed by the HMG-CoA synthase (HMGS) MYCGRDRAFT_54740 which catalyzes the generation of HMG-CoA and CoA using acetoacetyl-CoA and acetyl-CoA as substrates. The enoyl-CoA isomerase/hydratase MYCGRDRAFT_76805 then catalyzes the conversion of HMG-CoA to methylglutaconyl-CoA. The acyltransferase MYCGRDRAFT_85486 then fuses methylglutaconyl-CoA with hydroxyornithine to yield methylglutaconyl hydroxyornithine. Methylglutaconyl hydroxyornithine is then available for use by the nonribosomal peptide synthetase NRPS2 to generate the ferrichrome A-like siderophore. In Zymoseptoria tritici (strain CBS 115943 / IPO323) (Speckled leaf blotch fungus), this protein is Hydroxymethylglutaryl-CoA synthase MYCGRDRAFT_54740 (ERG13).